The sequence spans 598 residues: Nicotinamide riboside transporter 1 (598 aa).

The next 11 helical transmembrane spans lie at 48-68 (LAYW…SAAL), 71-91 (GLSY…TIIF), 112-132 (FVFG…MSIV), 174-194 (LVGF…KPYH), 197-217 (YLLI…VIYL), 241-261 (AWAW…GSTN), 273-293 (LAIW…VPIF), 372-392 (GALF…YNSS), 395-415 (FLTV…VMIC), 447-467 (AIVA…WEVN), and 484-504 (SFFS…FFPF). Residues Ser560 and Ser572 each carry the phosphoserine modification.

It belongs to the purine-cytosine permease (2.A.39) family.

The protein localises to the cell membrane. Its function is as follows. High-affinity pH-dependent nicotinamide riboside transporter which also transports thiamine with low affinity. Involved in 5-fluorocytosine sensitivity. This chain is Nicotinamide riboside transporter 1 (NRT1), found in Saccharomyces cerevisiae (strain ATCC 204508 / S288c) (Baker's yeast).